The primary structure comprises 246 residues: Proteolipid protein DM gamma (246 aa).

The next 4 helical transmembrane spans lie at 19–35, 71–87, 118–134, and 206–222; these read LLATILCFSGVALFCGC, VIYGVASFSFLYGIILL, VFLTYLLGIAWLGVFGF, and FIVACAGAGATVIALLI.

The protein belongs to the myelin proteolipid protein family. As to expression, highly expressed in white matter in myelinating shark brain.

It is found in the membrane. The polypeptide is Proteolipid protein DM gamma (Squalus acanthias (Spiny dogfish)).